Here is a 158-residue protein sequence, read N- to C-terminus: 2-amino-4-hydroxy-6-hydroxymethyldihydropteridine pyrophosphokinase (158 aa).

The protein belongs to the HPPK family.

The enzyme catalyses 6-hydroxymethyl-7,8-dihydropterin + ATP = (7,8-dihydropterin-6-yl)methyl diphosphate + AMP + H(+). Its pathway is cofactor biosynthesis; tetrahydrofolate biosynthesis; 2-amino-4-hydroxy-6-hydroxymethyl-7,8-dihydropteridine diphosphate from 7,8-dihydroneopterin triphosphate: step 4/4. Functionally, catalyzes the transfer of pyrophosphate from adenosine triphosphate (ATP) to 6-hydroxymethyl-7,8-dihydropterin, an enzymatic step in folate biosynthesis pathway. This Methylorubrum extorquens (strain ATCC 14718 / DSM 1338 / JCM 2805 / NCIMB 9133 / AM1) (Methylobacterium extorquens) protein is 2-amino-4-hydroxy-6-hydroxymethyldihydropteridine pyrophosphokinase (folK).